Here is a 341-residue protein sequence, read N- to C-terminus: Gibberellin 2-beta-dioxygenase 5 (341 aa).

The Fe2OG dioxygenase domain occupies 187 to 290 (REETCFLRLN…RFSMAFFLCP (104 aa)). Y198 contributes to the 2-oxoglutarate binding site. Positions 213, 215, and 271 each coordinate Fe cation. Residues R281 and S283 each coordinate 2-oxoglutarate.

The protein belongs to the iron/ascorbate-dependent oxidoreductase family. GA2OX subfamily. Requires L-ascorbate as cofactor. It depends on Fe(2+) as a cofactor. In terms of tissue distribution, expressed in roots, leaves, culms, leaf sheaths and young panicles.

The protein localises to the cytoplasm. It localises to the nucleus. The catalysed reaction is gibberellin A1 + 2-oxoglutarate + O2 = gibberellin A8 + succinate + CO2. It participates in plant hormone biosynthesis; gibberellin biosynthesis. Its function is as follows. Catalyzes the 2-beta-hydroxylation of several biologically active gibberellins (GAs), leading to the homeostatic regulation of their endogenous level. Catabolism of GAs plays a central role in plant development. In vitro, converts GA12 and GA53 to the corresponding 2-beta-hydroxylated products GA110 and GA97, respectively. The polypeptide is Gibberellin 2-beta-dioxygenase 5 (Oryza sativa subsp. japonica (Rice)).